The following is a 600-amino-acid chain: Epidermal growth factor receptor kinase substrate 8-like protein 3 (600 aa).

One can recognise a PTB domain in the interval 28-155 (QHRVEHLMTC…ALEEELEERP (128 aa)). Disordered stretches follow at residues 152–245 (EERP…PERD) and 429–452 (LHFP…PLSS). Over residues 204–214 (SERSISPSSRS) the composition is skewed to low complexity. S238 is subject to Phosphoserine. Residues 457–516 (RAALKMQVLYEFEARNAQELTVAQGEILEVLDQSKRWWLVKNEAGLTGYIPSNILEPLPA) enclose the SH3 domain.

Belongs to the EPS8 family. In terms of assembly, interacts with ABI1. Part of a complex that contains SOS1, ABI1 and EPS8L2. Interacts with FASLG. As to expression, detected in embryonic gut. Detected in adult testis, placenta, adrenal gland and intestine.

The protein localises to the cytoplasm. In Mus musculus (Mouse), this protein is Epidermal growth factor receptor kinase substrate 8-like protein 3 (Eps8l3).